We begin with the raw amino-acid sequence, 276 residues long: ADP-dependent (S)-NAD(P)H-hydrate dehydratase (276 aa).

The region spanning 5–269 is the YjeF C-terminal domain; it reads TPKAMCAWIP…EELPTYLKIF (265 aa). The (6S)-NADPHX site is built by alanine 40, glycine 103, and histidine 152. An AMP-binding site is contributed by glycine 211. (6S)-NADPHX is bound at residue aspartate 212.

Belongs to the NnrD/CARKD family. Homotetramer. Mg(2+) is required as a cofactor.

The catalysed reaction is (6S)-NADHX + ADP = AMP + phosphate + NADH + H(+). The enzyme catalyses (6S)-NADPHX + ADP = AMP + phosphate + NADPH + H(+). In terms of biological role, catalyzes the dehydration of the S-form of NAD(P)HX at the expense of ADP, which is converted to AMP. Together with NAD(P)HX epimerase, which catalyzes the epimerization of the S- and R-forms, the enzyme allows the repair of both epimers of NAD(P)HX, a damaged form of NAD(P)H that is a result of enzymatic or heat-dependent hydration. This is ADP-dependent (S)-NAD(P)H-hydrate dehydratase from Listeria monocytogenes serovar 1/2a (strain ATCC BAA-679 / EGD-e).